The following is a 149-amino-acid chain: 3-hydroxyacyl-[acyl-carrier-protein] dehydratase FabZ (149 aa).

Residue His-53 is part of the active site.

The protein belongs to the thioester dehydratase family. FabZ subfamily.

Its subcellular location is the cytoplasm. It carries out the reaction a (3R)-hydroxyacyl-[ACP] = a (2E)-enoyl-[ACP] + H2O. Functionally, involved in unsaturated fatty acids biosynthesis. Catalyzes the dehydration of short chain beta-hydroxyacyl-ACPs and long chain saturated and unsaturated beta-hydroxyacyl-ACPs. This chain is 3-hydroxyacyl-[acyl-carrier-protein] dehydratase FabZ, found in Polynucleobacter asymbioticus (strain DSM 18221 / CIP 109841 / QLW-P1DMWA-1) (Polynucleobacter necessarius subsp. asymbioticus).